The chain runs to 304 residues: Voltage-dependent anion channel-forming protein YneE (304 aa).

A run of 4 helical transmembrane segments spans residues Leu28–Leu48, Ile50–Phe70, Val194–Leu214, and Leu220–Ile240.

It belongs to the anion channel-forming bestrophin (TC 1.A.46) family.

The protein localises to the cell membrane. This chain is Voltage-dependent anion channel-forming protein YneE (yneE), found in Escherichia coli O157:H7.